A 262-amino-acid chain; its full sequence is 3-methyl-2-oxobutanoate hydroxymethyltransferase (262 aa).

2 residues coordinate Mg(2+): Asp-42 and Asp-81. Residues Asp-42–Ser-43, Asp-81, and Lys-110 contribute to the 3-methyl-2-oxobutanoate site. Residue Glu-112 participates in Mg(2+) binding. The active-site Proton acceptor is Glu-180.

Belongs to the PanB family. As to quaternary structure, homodecamer; pentamer of dimers. Mg(2+) is required as a cofactor.

It localises to the cytoplasm. It carries out the reaction 3-methyl-2-oxobutanoate + (6R)-5,10-methylene-5,6,7,8-tetrahydrofolate + H2O = 2-dehydropantoate + (6S)-5,6,7,8-tetrahydrofolate. Its pathway is cofactor biosynthesis; (R)-pantothenate biosynthesis; (R)-pantoate from 3-methyl-2-oxobutanoate: step 1/2. Its function is as follows. Catalyzes the reversible reaction in which hydroxymethyl group from 5,10-methylenetetrahydrofolate is transferred onto alpha-ketoisovalerate to form ketopantoate. The protein is 3-methyl-2-oxobutanoate hydroxymethyltransferase of Legionella pneumophila (strain Paris).